The sequence spans 321 residues: uncharacterized protein (321 aa).

The span at 1–12 (MSMFLKKQKKTK) shows a compositional bias: basic residues. 2 disordered regions span residues 1-59 (MSMF…MRKT) and 71-289 (EDCT…GPED). A compositionally biased stretch (basic and acidic residues) spans 50–59 (DGIKETMRKT). Residues 99–115 (DDSDSESSEDGGEDDEE) are compositionally biased toward acidic residues. Residues 156-175 (SDSSSSSSSSSDSESSSSSD) show a composition bias toward low complexity. Residues 179–189 (DGDRSTPEPDI) show a composition bias toward basic and acidic residues. Residues 231–242 (EPSPLRAAAAAA) show a composition bias toward low complexity.

This is an uncharacterized protein from Equus caballus (Horse).